The chain runs to 126 residues: Aspartate 1-decarboxylase (126 aa).

The active-site Schiff-base intermediate with substrate; via pyruvic acid is the serine 25. A Pyruvic acid (Ser) modification is found at serine 25. Threonine 57 is a binding site for substrate. The Proton donor role is filled by tyrosine 58. Residue 72–74 (GAA) participates in substrate binding.

The protein belongs to the PanD family. In terms of assembly, heterooctamer of four alpha and four beta subunits. The cofactor is pyruvate. Post-translationally, is synthesized initially as an inactive proenzyme, which is activated by self-cleavage at a specific serine bond to produce a beta-subunit with a hydroxyl group at its C-terminus and an alpha-subunit with a pyruvoyl group at its N-terminus.

It localises to the cytoplasm. The enzyme catalyses L-aspartate + H(+) = beta-alanine + CO2. It participates in cofactor biosynthesis; (R)-pantothenate biosynthesis; beta-alanine from L-aspartate: step 1/1. Functionally, catalyzes the pyruvoyl-dependent decarboxylation of aspartate to produce beta-alanine. The chain is Aspartate 1-decarboxylase from Campylobacter jejuni subsp. jejuni serotype O:23/36 (strain 81-176).